A 156-amino-acid chain; its full sequence is ATP synthase subunit b (156 aa).

The chain crosses the membrane as a helical span at residues Leu-11–Asn-31.

Belongs to the ATPase B chain family. In terms of assembly, F-type ATPases have 2 components, F(1) - the catalytic core - and F(0) - the membrane proton channel. F(1) has five subunits: alpha(3), beta(3), gamma(1), delta(1), epsilon(1). F(0) has three main subunits: a(1), b(2) and c(10-14). The alpha and beta chains form an alternating ring which encloses part of the gamma chain. F(1) is attached to F(0) by a central stalk formed by the gamma and epsilon chains, while a peripheral stalk is formed by the delta and b chains.

It is found in the cell inner membrane. Its function is as follows. F(1)F(0) ATP synthase produces ATP from ADP in the presence of a proton or sodium gradient. F-type ATPases consist of two structural domains, F(1) containing the extramembraneous catalytic core and F(0) containing the membrane proton channel, linked together by a central stalk and a peripheral stalk. During catalysis, ATP synthesis in the catalytic domain of F(1) is coupled via a rotary mechanism of the central stalk subunits to proton translocation. Component of the F(0) channel, it forms part of the peripheral stalk, linking F(1) to F(0). The polypeptide is ATP synthase subunit b (Haemophilus influenzae (strain 86-028NP)).